The sequence spans 319 residues: tRNA (guanine-N(7)-)-methyltransferase (319 aa).

A disordered region spans residues 1 to 44; that stretch reads MSESPETPEPSPAQSPEAAPEQPQAARPVTPGSQASFGTYGGRP. Over residues 14 to 26 the composition is skewed to low complexity; sequence QSPEAAPEQPQAA. Positions 103, 128, 155, and 178 each coordinate S-adenosyl-L-methionine. Asp178 is an active-site residue. Residues Lys182 and Asp214 each contribute to the substrate site. Residues 262–288 form a disordered region; the sequence is APVKEGRAPVSTEHTGPNEGVDETGGW. A substrate-binding site is contributed by 298–301; sequence TSFE.

Belongs to the class I-like SAM-binding methyltransferase superfamily. TrmB family.

It catalyses the reaction guanosine(46) in tRNA + S-adenosyl-L-methionine = N(7)-methylguanosine(46) in tRNA + S-adenosyl-L-homocysteine. It functions in the pathway tRNA modification; N(7)-methylguanine-tRNA biosynthesis. Functionally, catalyzes the formation of N(7)-methylguanine at position 46 (m7G46) in tRNA. This chain is tRNA (guanine-N(7)-)-methyltransferase, found in Arthrobacter sp. (strain FB24).